The following is a 277-amino-acid chain: Indole-3-glycerol phosphate synthase (277 aa).

This sequence belongs to the TrpC family.

It carries out the reaction 1-(2-carboxyphenylamino)-1-deoxy-D-ribulose 5-phosphate + H(+) = (1S,2R)-1-C-(indol-3-yl)glycerol 3-phosphate + CO2 + H2O. Its pathway is amino-acid biosynthesis; L-tryptophan biosynthesis; L-tryptophan from chorismate: step 4/5. The protein is Indole-3-glycerol phosphate synthase of Pseudomonas putida (strain ATCC 700007 / DSM 6899 / JCM 31910 / BCRC 17059 / LMG 24140 / F1).